We begin with the raw amino-acid sequence, 247 residues long: Bidirectional sugar transporter SWEET1 (247 aa).

At 1 to 6 the chain is on the extracellular side; that stretch reads MNIAHT. Residues 7 to 27 traverse the membrane as a helical segment; that stretch reads IFGVFGNATALFLFLAPSITF. A MtN3/slv 1 domain is found at 7 to 94; sequence IFGVFGNATA…LIFLFYAPKK (88 aa). The Cytoplasmic segment spans residues 28–41; sequence KRIIKNKSTEQFSG. Residues 42–62 form a helical membrane-spanning segment; it reads IPYPMTLLNCLLSAWYGLPFV. Residues 63–71 are Extracellular-facing; it reads SKDNTLVST. The chain crosses the membrane as a helical span at residues 72–92; sequence INGTGAVIETVYVLIFLFYAP. Over 93 to 98 the chain is Cytoplasmic; it reads KKEKIK. The helical transmembrane segment at 99–119 threads the bilayer; sequence IFGIFSCVLAVFATVALVSLF. Topologically, residues 120–127 are extracellular; the sequence is ALQGNGRK. Residues 128 to 148 form a helical membrane-spanning segment; the sequence is LFCGLAATVFSIIMYASPLSI. A MtN3/slv 2 domain is found at 130-213; the sequence is CGLAATVFSI…ILYFIYCGNK (84 aa). Residues 149-162 are Cytoplasmic-facing; the sequence is MRLVVKTKSVEFMP. Residues 163–183 form a helical membrane-spanning segment; it reads FFLSLFVFLCGTSWFVYGLIG. Residues 184–187 are Extracellular-facing; the sequence is RDPF. Residues 188-208 form a helical membrane-spanning segment; sequence VAIPNGFGCALGTLQLILYFI. At 209 to 247 the chain is on the cytoplasmic side; sequence YCGNKGEKSADAQKDEKSVEMKDDEKKQNVVNGKQDLQV. Residues 221–236 show a composition bias toward basic and acidic residues; that stretch reads QKDEKSVEMKDDEKKQ. The segment at 221–247 is disordered; sequence QKDEKSVEMKDDEKKQNVVNGKQDLQV. Over residues 237–247 the composition is skewed to polar residues; it reads NVVNGKQDLQV.

It belongs to the SWEET sugar transporter family. Forms homooligomers and heterooligomers with SWEET9, SWEET11, SWEET13, SWEET15, SWEET16 and SWEET17. In terms of tissue distribution, mainly expressed in flowers.

It is found in the cell membrane. It localises to the endoplasmic reticulum membrane. In terms of biological role, mediates both low-affinity uptake and efflux of sugar across the plasma membrane. Can transport glucose, and, to a lower extent, mannose, fructose and galactose. The polypeptide is Bidirectional sugar transporter SWEET1 (Arabidopsis thaliana (Mouse-ear cress)).